Here is a 476-residue protein sequence, read N- to C-terminus: Serine/threonine-protein kinase chk-2 (476 aa).

Positions 66 to 127 (FVCGRGSDDA…NGTLVNQEMI (62 aa)) constitute an FHA domain. One can recognise a Protein kinase domain in the interval 170-436 (HVTSHSLGKG…AVELMSTQWM (267 aa)). Residues 177 to 184 (GKGGFGKV), lysine 199, and 252 to 258 (EYVGGGE) contribute to the ATP site. The active-site Proton acceptor is the aspartate 301. Residues 305–306 (EN) and aspartate 322 contribute to the ATP site.

Belongs to the protein kinase superfamily. CAMK Ser/Thr protein kinase family. CHK2 subfamily. Requires Mg(2+) as cofactor. In terms of tissue distribution, highly expressed in germline tissue.

It is found in the nucleus. The catalysed reaction is L-seryl-[protein] + ATP = O-phospho-L-seryl-[protein] + ADP + H(+). It carries out the reaction L-threonyl-[protein] + ATP = O-phospho-L-threonyl-[protein] + ADP + H(+). In terms of biological role, serine/threonine-protein kinase which is required for checkpoint-mediated cell cycle arrest, activation of DNA repair and apoptosis in response to the presence of DNA double-strand breaks. May also negatively regulate cell cycle progression during unperturbed cell cycles. Phosphorylates and inhibits cdc25 phosphatase, preventing entry into mitosis. Required for nuclear reorganization and homologous chromosome pairing during meiotic prophase. The protein is Serine/threonine-protein kinase chk-2 (chk-2) of Caenorhabditis elegans.